Consider the following 670-residue polypeptide: WD repeat-containing protein 48 homolog (670 aa).

WD repeat units lie at residues 13–52 (RHRN…SQEP), 59–98 (HHND…CMST), 101–140 (THRD…ALTA), 152–191 (GSKD…KIAK), 194–233 (GHTE…CIQT), 236–275 (VHSE…NSVL), and 278–317 (EERA…KLSN). The disordered stretch occupies residues 321 to 348 (SSNSSINSGGGGDGTPVTNSASNATPAS). The segment covering 338 to 348 (TNSASNATPAS) has biased composition (low complexity). One copy of the WD 8 repeat lies at 359–398 (KGGAAIKKYHVLNDKRFMLTKDSEQNVAIYDVLKVKKVED). Positions 613-625 (GGGGGSSTGGGGN) are enriched in gly residues. The interval 613–645 (GGGGGSSTGGGGNSNSSQNNSQSDANSEGSQVP) is disordered. Residues 626-635 (SNSSQNNSQS) are compositionally biased toward low complexity.

The protein belongs to the WD repeat WDR48 family. As to quaternary structure, catalytic component of the Usp12-46 deubiquitylase complex consisting of Usp12-46, Wdr20 and Uaf1; regulatory subunit that, together wtih Wdr20, stabilizes Usp12-46. The Usp12-46 deubiquitylase complex associates with arr/arrow; the interaction leads to deubiquitination and stabilization of arr/arrow.

Functionally, regulatory component of the Usp12-46 deubiquitylase complex. activates deubiquitination by increasing the catalytic turnover without increasing the affinity of deubiquitinating enzymes for the substrate. The complex deubiquitylates the wg/wingless-signaling receptor arr/arrow, which stabilizes the receptor and increases its concentration at the cell surface; this enhances the sensitivity of cells to wg/wingless-signal stimulation. This increases the amplitude and spatial range of the signaling response to the wg/wingless morphogen gradient, facilitating the precise concentration-dependent regulation of its target genes. Together with Wdr20 and Usp12-46 required for wg/wingless-mediated signaling in the wing imaginal disc and for wg/wingless-dependent regulation of intestinal stem cell proliferation. The sequence is that of WD repeat-containing protein 48 homolog from Culex quinquefasciatus (Southern house mosquito).